Here is a 286-residue protein sequence, read N- to C-terminus: F-box/SPRY domain-containing protein 1 (286 aa).

Ala-2 is subject to N-acetylalanine. The F-box domain occupies 33 to 82 (SGVGGRLPSRVLELVFSYLELSELRSCALVCKHWYRCLHGDENSEVWRSL). Residues 92–284 (LRTDILCNLP…VTLVYLGKPL (193 aa)) enclose the B30.2/SPRY domain.

It belongs to the FBXO45/Fsn family. As to quaternary structure, forms a complex with MYCBP2 and SKP1. Interacts with HEY1; leading to FBXO45 nuclear translocation. Interacts (via SPRY domain) with CDH2. Expressed speciffically in the central nervous system, including cerebellum, medulla oblongata, olfactory bulb, hippocampus, cortex and brain stem.

The protein resides in the secreted. It localises to the postsynaptic cell membrane. Its subcellular location is the presynaptic cell membrane. It is found in the nucleus. Its pathway is protein modification; protein ubiquitination. In terms of biological role, component of E3 ubiquitin ligase complex consisting of FBXO45, MYCBP2 and SKP1. Functions in substrate recognition but plays also an important role in assembly of the complex. Required for normal neuromuscular synaptogenesis, axon pathfinding and neuronal migration. Regulates neuron migration during brain development through interaction with N-cadherin/CDH2 after secretion via a non-classical mechanism. Plays a role in the regulation of neurotransmission at mature neurons. May control synaptic activity by controlling UNC13A via ubiquitin dependent pathway. Specifically recognizes TP73, promoting its ubiquitination and degradation. Polyubiquitinates NMNAT2, an adenylyltransferase that acts as an axon maintenance factor, and regulates its stability and degradation by the proteasome. Acts also by ubiquitinating FBXW7 during prolonged mitotic arrest and promotes FBXW7 proteasomal degradation. Induces subsequently an increase in mitotic slippage and prevents mitotic cell death. In response to influenza infection, mediates interferon-lambda receptor IFNLR1 polyubiquitination and degradation through the ubiquitin-proteasome system by docking with its intracellular receptor domain. The sequence is that of F-box/SPRY domain-containing protein 1 from Mus musculus (Mouse).